Here is a 417-residue protein sequence, read N- to C-terminus: Gamma-glutamyl phosphate reductase (417 aa).

It belongs to the gamma-glutamyl phosphate reductase family.

The protein resides in the cytoplasm. The enzyme catalyses L-glutamate 5-semialdehyde + phosphate + NADP(+) = L-glutamyl 5-phosphate + NADPH + H(+). It functions in the pathway amino-acid biosynthesis; L-proline biosynthesis; L-glutamate 5-semialdehyde from L-glutamate: step 2/2. Catalyzes the NADPH-dependent reduction of L-glutamate 5-phosphate into L-glutamate 5-semialdehyde and phosphate. The product spontaneously undergoes cyclization to form 1-pyrroline-5-carboxylate. This Haemophilus influenzae (strain ATCC 51907 / DSM 11121 / KW20 / Rd) protein is Gamma-glutamyl phosphate reductase.